Consider the following 957-residue polypeptide: Mediator of RNA polymerase II transcription subunit 16 (957 aa).

The tract at residues 855–883 (YTEVDAAPSGKTNAQGPPQQPQPQQQRRR) is disordered.

Belongs to the Mediator complex subunit 16 family. Component of the Mediator complex.

The protein localises to the nucleus. In terms of biological role, component of the Mediator complex, a coactivator involved in the regulated transcription of nearly all RNA polymerase II-dependent genes. Mediator functions as a bridge to convey information from gene-specific regulatory proteins to the basal RNA polymerase II transcription machinery. Mediator is recruited to promoters by direct interactions with regulatory proteins and serves as a scaffold for the assembly of a functional preinitiation complex with RNA polymerase II and the general transcription factors. This is Mediator of RNA polymerase II transcription subunit 16 (sin4) from Aspergillus clavatus (strain ATCC 1007 / CBS 513.65 / DSM 816 / NCTC 3887 / NRRL 1 / QM 1276 / 107).